The sequence spans 162 residues: Nucleotide-binding protein Anae109_0095 (162 aa).

Belongs to the YajQ family.

Nucleotide-binding protein. This is Nucleotide-binding protein Anae109_0095 from Anaeromyxobacter sp. (strain Fw109-5).